Consider the following 1186-residue polypeptide: Tricalbin-1 (1186 aa).

The segment at 1-50 (MAKEDTGVTAPKKPETAQVANINGIDKLEPPKTKEETESSKSVSSEKAAH) is disordered. The Cytoplasmic segment spans residues 1-106 (MAKEDTGVTA…NIIPDSLYGD (106 aa)). The segment covering 26 to 39 (DKLEPPKTKEETES) has biased composition (basic and acidic residues). Residues 107-127 (WYHSVAIFFIGGVASFALGHY) form a helical membrane-spanning segment. Residue Lys-128 is a topological domain, extracellular. A helical membrane pass occupies residues 129-149 (FSMGSAFFVIVITSLLYRTSA). At 150-1186 (KKYRGSIREL…HEMGEEETKF (1037 aa)) the chain is on the cytoplasmic side. One can recognise an SMP-LTD domain in the interval 172 to 375 (DYESLEWLNA…PPFSLQLNIP (204 aa)). C2 domains are found at residues 366–487 (PPFS…RNLK), 512–636 (EKKL…IKIT), and 640–757 (RPVR…DKYE). Positions 795–822 (LEEIQDLDKVNKKKKALELRKSAIDEKK) form a coiled coil. The 119-residue stretch at 976-1094 (PIDTKQLPAN…KVEGTTELDV (119 aa)) folds into the C2 4 domain. Ser-1000 carries the post-translational modification Phosphoserine. Ca(2+)-binding residues include Asp-1008, Asp-1014, Asp-1064, Asp-1066, Ser-1069, and Asp-1072.

Belongs to the tricalbin family. In terms of assembly, interacts with TCB2 via its C-terminal domain. Requires Ca(2+) as cofactor.

It is found in the cell membrane. The protein localises to the endoplasmic reticulum membrane. In terms of biological role, may play a role in membrane trafficking. The chain is Tricalbin-1 (TCB1) from Saccharomyces cerevisiae (strain ATCC 204508 / S288c) (Baker's yeast).